Here is a 510-residue protein sequence, read N- to C-terminus: Kynurenine 3-monooxygenase (510 aa).

Belongs to the aromatic-ring hydroxylase family. KMO subfamily. Requires FAD as cofactor.

The protein localises to the mitochondrion outer membrane. It carries out the reaction L-kynurenine + NADPH + O2 + H(+) = 3-hydroxy-L-kynurenine + NADP(+) + H2O. It participates in cofactor biosynthesis; NAD(+) biosynthesis; quinolinate from L-kynurenine: step 1/3. Catalyzes the hydroxylation of L-kynurenine (L-Kyn) to form 3-hydroxy-L-kynurenine (L-3OHKyn). Required for synthesis of quinolinic acid. The chain is Kynurenine 3-monooxygenase (bna4) from Aspergillus oryzae (strain ATCC 42149 / RIB 40) (Yellow koji mold).